The following is a 34-amino-acid chain: Photosystem II reaction center protein T (34 aa).

Residues 3 to 23 (ALVYTFLLVGTLGIIFFAIFF) traverse the membrane as a helical segment.

The protein belongs to the PsbT family. PSII is composed of 1 copy each of membrane proteins PsbA, PsbB, PsbC, PsbD, PsbE, PsbF, PsbH, PsbI, PsbJ, PsbK, PsbL, PsbM, PsbT, PsbY, PsbZ, Psb30/Ycf12, at least 3 peripheral proteins of the oxygen-evolving complex and a large number of cofactors. It forms dimeric complexes.

The protein localises to the plastid. It localises to the chloroplast thylakoid membrane. Found at the monomer-monomer interface of the photosystem II (PS II) dimer, plays a role in assembly and dimerization of PSII. PSII is a light-driven water plastoquinone oxidoreductase, using light energy to abstract electrons from H(2)O, generating a proton gradient subsequently used for ATP formation. This is Photosystem II reaction center protein T from Klebsormidium bilatum (Filamentous green alga).